The following is a 231-amino-acid chain: Regulatory protein VanR (231 aa).

The Response regulatory domain occupies Lys-4–Leu-117. A 4-aspartylphosphate modification is found at Asp-53. The segment at residues Glu-131–Lys-231 is a DNA-binding region (ompR/PhoB-type).

In terms of assembly, monomer. In terms of processing, phosphorylated by VanS. Dephosphorylated by VanS. Can be phosphorylated nonenzymatically by acetyl-phosphate.

It is found in the cytoplasm. Functionally, member of the two-component regulatory system VanS/VanR. Binds to the promoter regions of target genes, including vanH and vanR; phosphorylation of VanR increases binding affinity to the vanH and vanR promoters significantly. DNA binding may be inhibited by the cognate sensor protein, VanS. Activates the transcription of vanH, vanA and vanX in response to vancomycin which results in vancomycin resistance. Involved in conferring vancomycin resistance. The protein is Regulatory protein VanR (vanR) of Enterococcus faecium (Streptococcus faecium).